The sequence spans 58 residues: uncharacterized protein (58 aa).

The span at 23–51 (TTTSTSTTTTSTTTSTTTSTTTTTTTTTT) shows a compositional bias: low complexity. The interval 23 to 58 (TTTSTSTTTTSTTTSTTTSTTTTTTTTTTKDFNTET) is disordered.

This is an uncharacterized protein from Dictyostelium discoideum (Social amoeba).